The following is a 282-amino-acid chain: HTH-type transcriptional activator RhaR (282 aa).

The 99-residue stretch at 179-277 (DKLITALANS…GMTPSQWRHL (99 aa)) folds into the HTH araC/xylS-type domain. DNA-binding regions (H-T-H motif) lie at residues 196 to 217 (DAFCQQEQCSERVLRQQFRAQT) and 244 to 267 (ISEISMQCGFEDSNYFSVVFTRET).

As to quaternary structure, binds DNA as a dimer.

It is found in the cytoplasm. In terms of biological role, activates expression of the rhaSR operon in response to L-rhamnose. The polypeptide is HTH-type transcriptional activator RhaR (Salmonella dublin (strain CT_02021853)).